Here is a 785-residue protein sequence, read N- to C-terminus: Endonuclease MutS2 (785 aa).

An ATP-binding site is contributed by 335–342 (GPNTGGKT). In terms of domain architecture, Smr spans 710-785 (LDLRGERYED…GNGVTIVEFK (76 aa)).

It belongs to the DNA mismatch repair MutS family. MutS2 subfamily. Homodimer. Binds to stalled ribosomes, contacting rRNA.

Endonuclease that is involved in the suppression of homologous recombination and thus may have a key role in the control of bacterial genetic diversity. Functionally, acts as a ribosome collision sensor, splitting the ribosome into its 2 subunits. Detects stalled/collided 70S ribosomes which it binds and splits by an ATP-hydrolysis driven conformational change. Acts upstream of the ribosome quality control system (RQC), a ribosome-associated complex that mediates the extraction of incompletely synthesized nascent chains from stalled ribosomes and their subsequent degradation. Probably generates substrates for RQC. This Listeria monocytogenes serotype 4a (strain HCC23) protein is Endonuclease MutS2.